The primary structure comprises 157 residues: Protein Smg (157 aa).

The protein belongs to the Smg family.

This Escherichia coli O6:H1 (strain CFT073 / ATCC 700928 / UPEC) protein is Protein Smg.